The chain runs to 79 residues: RNA-binding protein KhpA (79 aa).

Residues 32 to 79 (TVVIELRVDPAELGKVIGKQGRIARALRTILTAIGRKIGKRVVLEILE) form the KH domain.

It belongs to the KhpA RNA-binding protein family.

Its subcellular location is the cytoplasm. In terms of biological role, a probable RNA-binding protein. The sequence is that of RNA-binding protein KhpA from Aquifex aeolicus (strain VF5).